Reading from the N-terminus, the 665-residue chain is Transketolase (665 aa).

A substrate-binding site is contributed by His-26. Residues His-66 and 114–116 (GPL) each bind thiamine diphosphate. The disordered stretch occupies residues 94–114 (NSKTPGHPETGETPGVETTTG). Residues 97–114 (TPGHPETGETPGVETTTG) are compositionally biased toward low complexity. Asp-155 contributes to the Mg(2+) binding site. Residues Gly-156 and Asn-185 each coordinate thiamine diphosphate. 2 residues coordinate Mg(2+): Asn-185 and Ile-187. Residues His-261, Arg-358, and Ser-385 each coordinate substrate. His-261 contacts thiamine diphosphate. The active-site Proton donor is the Glu-411. A thiamine diphosphate-binding site is contributed by Phe-437. His-461, Asp-469, and Arg-520 together coordinate substrate.

The protein belongs to the transketolase family. In terms of assembly, homodimer. It depends on Mg(2+) as a cofactor. Ca(2+) is required as a cofactor. Mn(2+) serves as cofactor. Requires Co(2+) as cofactor. The cofactor is thiamine diphosphate.

It catalyses the reaction D-sedoheptulose 7-phosphate + D-glyceraldehyde 3-phosphate = aldehydo-D-ribose 5-phosphate + D-xylulose 5-phosphate. In terms of biological role, catalyzes the transfer of a two-carbon ketol group from a ketose donor to an aldose acceptor, via a covalent intermediate with the cofactor thiamine pyrophosphate. This chain is Transketolase (tkt), found in Buchnera aphidicola subsp. Acyrthosiphon pisum (strain APS) (Acyrthosiphon pisum symbiotic bacterium).